The sequence spans 509 residues: Thymus-specific serine protease (509 aa).

The signal sequence occupies residues 1-22 (MAVKAPWLGFLLLVSLWGLSTP). N-linked (GlcNAc...) asparagine glycosylation is found at Asn69 and Asn171. Ser184 functions as the Charge relay system in the catalytic mechanism. Asn320 is a glycosylation site (N-linked (GlcNAc...) asparagine). Residues Asp446 and His471 each act as charge relay system in the active site.

Belongs to the peptidase S28 family. In terms of tissue distribution, expressed predominantly in cortical thymic epithelial cells, with highest expression around vessels and the thymic capsule.

It is found in the cytoplasmic vesicle. Functionally, protease that may play a role in T-cell development. The protein is Thymus-specific serine protease (Prss16) of Mus musculus (Mouse).